The following is a 400-amino-acid chain: MAKQKFERTKPHVNVGTIGHVDHGKTTSTAAITLVLSKAGGAVAQAFDQIDKAPEERERGITISTSHVEYETANRHYAHVDCPGHADYVKNMITGAAQMDGAILVVSAADGPMPQTREHILLARQVGVPYIVVWLNKADMVDDPELMELVEMEIRELLSEYEFPGDDIPIIPGSGLKALQCGCGSRDCEWCGKIWNLMDAVDSYIPTPERATDKPFLMPVEDVFTITGRGTVATGRVERGVIKVGDEIEIVGLTEAPRKTVCTGVEMFRKLLDQAQAGDNIGALLRGVDRKDIERGQVLAKTGSIKPHTKFTGEVFVLSKEEGGRHTPFFNNYRPQFYFRTTDVTGVVTLPEGTEMVMPGDRVTITCEIISPIAMEEGLRFAIREGGRTVGAGVVVSIIE.

In terms of domain architecture, tr-type G spans 10 to 209 (KPHVNVGTIG…AVDSYIPTPE (200 aa)). Positions 19 to 26 (GHVDHGKT) are G1. 19–26 (GHVDHGKT) contacts GTP. Mg(2+) is bound at residue threonine 26. The G2 stretch occupies residues 60–64 (GITIS). The G3 stretch occupies residues 81-84 (DCPG). GTP-binding positions include 81 to 85 (DCPGH) and 136 to 139 (NKAD). Residues 136–139 (NKAD) form a G4 region. The segment at 174–176 (SGL) is G5.

It belongs to the TRAFAC class translation factor GTPase superfamily. Classic translation factor GTPase family. EF-Tu/EF-1A subfamily. As to quaternary structure, monomer.

It is found in the cytoplasm. The catalysed reaction is GTP + H2O = GDP + phosphate + H(+). In terms of biological role, GTP hydrolase that promotes the GTP-dependent binding of aminoacyl-tRNA to the A-site of ribosomes during protein biosynthesis. This chain is Elongation factor Tu, found in Desulfitobacterium hafniense (strain DSM 10664 / DCB-2).